The chain runs to 105 residues: MTITQQTKIRIKLKAYNSIILNTSCDKILDTASRTNAVAVGPIPLPTKRRIYCVLRSPHVDKDSREHFEIRSHRRIIDIHQPSSQTIDALMKLNLPSGVDIEVKL.

Belongs to the universal ribosomal protein uS10 family. As to quaternary structure, part of the 30S ribosomal subunit.

It is found in the plastid. It localises to the chloroplast. Its function is as follows. Involved in the binding of tRNA to the ribosomes. This is Small ribosomal subunit protein uS10c from Pyropia yezoensis (Susabi-nori).